Here is a 327-residue protein sequence, read N- to C-terminus: Acetyl-coenzyme A carboxylase carboxyl transferase subunit alpha (327 aa).

The region spanning Leu46 to Asp299 is the CoA carboxyltransferase C-terminal domain.

Belongs to the AccA family. In terms of assembly, acetyl-CoA carboxylase is a heterohexamer composed of biotin carboxyl carrier protein (AccB), biotin carboxylase (AccC) and two subunits each of ACCase subunit alpha (AccA) and ACCase subunit beta (AccD).

It is found in the cytoplasm. It carries out the reaction N(6)-carboxybiotinyl-L-lysyl-[protein] + acetyl-CoA = N(6)-biotinyl-L-lysyl-[protein] + malonyl-CoA. The protein operates within lipid metabolism; malonyl-CoA biosynthesis; malonyl-CoA from acetyl-CoA: step 1/1. Its function is as follows. Component of the acetyl coenzyme A carboxylase (ACC) complex. First, biotin carboxylase catalyzes the carboxylation of biotin on its carrier protein (BCCP) and then the CO(2) group is transferred by the carboxyltransferase to acetyl-CoA to form malonyl-CoA. This chain is Acetyl-coenzyme A carboxylase carboxyl transferase subunit alpha, found in Synechococcus elongatus (strain ATCC 33912 / PCC 7942 / FACHB-805) (Anacystis nidulans R2).